Consider the following 344-residue polypeptide: Centromere protein N (344 aa).

This sequence belongs to the CENP-N/CHL4 family.

It localises to the nucleus. It is found in the chromosome. The protein resides in the centromere. Functionally, probable component of a centromeric complex involved in assembly of kinetochore proteins, mitotic progression and chromosome segregation. This is Centromere protein N (CENPN) from Gallus gallus (Chicken).